Reading from the N-terminus, the 358-residue chain is Peptide chain release factor 1 (358 aa).

Position 233 is an N5-methylglutamine (Gln-233).

This sequence belongs to the prokaryotic/mitochondrial release factor family. In terms of processing, methylated by PrmC. Methylation increases the termination efficiency of RF1.

It localises to the cytoplasm. Peptide chain release factor 1 directs the termination of translation in response to the peptide chain termination codons UAG and UAA. The polypeptide is Peptide chain release factor 1 (Staphylococcus aureus (strain MRSA252)).